Here is a 158-residue protein sequence, read N- to C-terminus: Phosphopantetheine adenylyltransferase (158 aa).

The protein belongs to the eukaryotic CoaD family.

The protein resides in the cytoplasm. The catalysed reaction is (R)-4'-phosphopantetheine + ATP + H(+) = 3'-dephospho-CoA + diphosphate. Its pathway is cofactor biosynthesis; coenzyme A biosynthesis. Functionally, reversibly transfers an adenylyl group from ATP to 4'-phosphopantetheine, yielding dephospho-CoA (dPCoA) and pyrophosphate. In Pyrococcus horikoshii (strain ATCC 700860 / DSM 12428 / JCM 9974 / NBRC 100139 / OT-3), this protein is Phosphopantetheine adenylyltransferase.